Consider the following 409-residue polypeptide: Short chain dehydrogenase sirS (409 aa).

Val49, Leu68, Lys195, Val288, Thr290, and Ala299 together coordinate NADP(+). The interval 306–332 (GVGPEGAGEEEGKGEAEGGAKGATGWS) is disordered.

Belongs to the short-chain dehydrogenases/reductases (SDR) family. Highly divergent.

The protein operates within mycotoxin biosynthesis. Short chain dehydrogenase; part of the gene cluster that mediates the biosynthesis of sirodesmin PL, an epipolythiodioxopiperazine (ETP) characterized by a disulfide bridged cyclic dipeptide and that acts as a phytotoxin which is involved in the blackleg didease of canola. SirD catalyzes the O-prenylation of L-tyrosine (L-Tyr) in the presence of dimethylallyl diphosphate (DMAPP) to yield 4-O-dimethylallyl-L-Tyr, and therefore represents probably the first pathway-specific enzyme in the biosynthesis of sirodesmin PL. 4-O-dimethylallyl-L-Tyr, then undergoes condensation with L-Ser in a reaction catalyzed by the non-ribosomal peptide synthase sirP to form the diketopiperazine (DKP) backbone. Further bishydroxylation of the DKP performed by the cytochrome P450 monooxygenase sirC leads to the production of the intermediate phomamide. This step is essential to form the reactive thiol group required for toxicity of sirodesmin PL. The next steps of sirodesmin biosynthesis are not well understood yet, but some predictions could be made from intermediate compounds identification. Phomamide is converted into phomalizarine via oxidation, probably by sirT. Further oxidation, methylation (by sirM or sirN) and reduction steps convert phomalizarine to deacetyl sirodesmin. Finally, acetyltransferase sirH probably acetylates deacetyl sirodesmin to produce sirodesmin PL. This chain is Short chain dehydrogenase sirS, found in Leptosphaeria maculans (Blackleg fungus).